Reading from the N-terminus, the 153-residue chain is Ribonuclease H (153 aa).

The region spanning 4–146 is the RNase H type-1 domain; that stretch reads NNEIVEIYTD…CDRLATEQIK (143 aa). Positions 13, 51, 73, and 138 each coordinate Mg(2+).

The protein belongs to the RNase H family. In terms of assembly, monomer. Requires Mg(2+) as cofactor.

It is found in the cytoplasm. It catalyses the reaction Endonucleolytic cleavage to 5'-phosphomonoester.. Endonuclease that specifically degrades the RNA of RNA-DNA hybrids. The polypeptide is Ribonuclease H (Caldanaerobacter subterraneus subsp. tengcongensis (strain DSM 15242 / JCM 11007 / NBRC 100824 / MB4) (Thermoanaerobacter tengcongensis)).